A 183-amino-acid chain; its full sequence is Ribosome-recycling factor (183 aa).

This sequence belongs to the RRF family.

It localises to the cytoplasm. Responsible for the release of ribosomes from messenger RNA at the termination of protein biosynthesis. May increase the efficiency of translation by recycling ribosomes from one round of translation to another. The polypeptide is Ribosome-recycling factor (Ureaplasma parvum serovar 3 (strain ATCC 27815 / 27 / NCTC 11736)).